The sequence spans 635 residues: Chaperone protein HtpG (635 aa).

Positions 1–346 (MSQTTTNSAS…SADLPLNVSR (346 aa)) are a; substrate-binding. Residues 347 to 563 (EILQESRDVR…QNELSPHLLR (217 aa)) are b. A c region spans residues 564–635 (MLKAAGQEAP…KRLNGLLLKA (72 aa)).

The protein belongs to the heat shock protein 90 family. In terms of assembly, homodimer.

It is found in the cytoplasm. Functionally, molecular chaperone. Has ATPase activity. The chain is Chaperone protein HtpG from Bordetella parapertussis (strain 12822 / ATCC BAA-587 / NCTC 13253).